We begin with the raw amino-acid sequence, 350 residues long: 3-isopropylmalate dehydrogenase (350 aa).

71–84 contributes to the NAD(+) binding site; sequence GPKWADAPRHLRPE. Substrate-binding residues include arginine 91, arginine 101, arginine 129, and aspartate 220. Residues aspartate 220, aspartate 244, and aspartate 248 each contribute to the Mg(2+) site. Residue 279 to 291 coordinates NAD(+); it reads GSAPDIAGKGLAN.

It belongs to the isocitrate and isopropylmalate dehydrogenases family. LeuB type 1 subfamily. In terms of assembly, homodimer. It depends on Mg(2+) as a cofactor. The cofactor is Mn(2+).

Its subcellular location is the cytoplasm. It carries out the reaction (2R,3S)-3-isopropylmalate + NAD(+) = 4-methyl-2-oxopentanoate + CO2 + NADH. It participates in amino-acid biosynthesis; L-leucine biosynthesis; L-leucine from 3-methyl-2-oxobutanoate: step 3/4. Catalyzes the oxidation of 3-carboxy-2-hydroxy-4-methylpentanoate (3-isopropylmalate) to 3-carboxy-4-methyl-2-oxopentanoate. The product decarboxylates to 4-methyl-2 oxopentanoate. In Caulobacter vibrioides (strain ATCC 19089 / CIP 103742 / CB 15) (Caulobacter crescentus), this protein is 3-isopropylmalate dehydrogenase.